Here is a 251-residue protein sequence, read N- to C-terminus: Cell division protein ZapD (251 aa).

Belongs to the ZapD family. As to quaternary structure, interacts with FtsZ.

The protein localises to the cytoplasm. In terms of biological role, cell division factor that enhances FtsZ-ring assembly. Directly interacts with FtsZ and promotes bundling of FtsZ protofilaments, with a reduction in FtsZ GTPase activity. The polypeptide is Cell division protein ZapD (Burkholderia thailandensis (strain ATCC 700388 / DSM 13276 / CCUG 48851 / CIP 106301 / E264)).